The chain runs to 402 residues: 2,3-bisphosphoglycerate-independent phosphoglycerate mutase 2 (402 aa).

Belongs to the BPG-independent phosphoglycerate mutase family. A-PGAM subfamily.

It catalyses the reaction (2R)-2-phosphoglycerate = (2R)-3-phosphoglycerate. It participates in carbohydrate degradation; glycolysis; pyruvate from D-glyceraldehyde 3-phosphate: step 3/5. In terms of biological role, catalyzes the interconversion of 2-phosphoglycerate and 3-phosphoglycerate. The protein is 2,3-bisphosphoglycerate-independent phosphoglycerate mutase 2 (apgM2) of Methanothermobacter thermautotrophicus (strain ATCC 29096 / DSM 1053 / JCM 10044 / NBRC 100330 / Delta H) (Methanobacterium thermoautotrophicum).